A 218-amino-acid polypeptide reads, in one-letter code: Recombination protein RecR (218 aa).

Residues 56-71 (CRICCNISRDEVCRIC) form a C4-type zinc finger. One can recognise a Toprim domain in the interval 79-195 (GLICVVEEPK…VVSRLASGMP (117 aa)).

This sequence belongs to the RecR family.

In terms of biological role, may play a role in DNA repair. It seems to be involved in an RecBC-independent recombinational process of DNA repair. It may act with RecF and RecO. The chain is Recombination protein RecR from Corynebacterium efficiens (strain DSM 44549 / YS-314 / AJ 12310 / JCM 11189 / NBRC 100395).